The primary structure comprises 140 residues: Smith-Magenis syndrome chromosomal region candidate gene 5 protein (140 aa).

Residues 43-77 (CTGPSSQAPPQPPQASPPAAADHSRTPSLLASSHS) form a disordered region. Pro residues predominate over residues 49-58 (QAPPQPPQAS).

Widely expressed.

In Homo sapiens (Human), this protein is Smith-Magenis syndrome chromosomal region candidate gene 5 protein (SMCR5).